A 177-amino-acid polypeptide reads, in one-letter code: Large ribosomal subunit protein uL6 (177 aa).

The protein belongs to the universal ribosomal protein uL6 family. In terms of assembly, part of the 50S ribosomal subunit.

This protein binds to the 23S rRNA, and is important in its secondary structure. It is located near the subunit interface in the base of the L7/L12 stalk, and near the tRNA binding site of the peptidyltransferase center. The chain is Large ribosomal subunit protein uL6 from Pseudomonas syringae pv. tomato (strain ATCC BAA-871 / DC3000).